An 816-amino-acid chain; its full sequence is Neuroligin-4, Y-linked (816 aa).

Residues 1-43 form the signal peptide; it reads MLRPQGLLWLPLLFTSVCVMLNSNVLLWITALAIKFTLIDSQA. Topologically, residues 44–676 are extracellular; the sequence is QYPVVNTNYG…TKRDYSTELS (633 aa). Asn102 carries an N-linked (GlcNAc...) asparagine glycan. Intrachain disulfides connect Cys110/Cys146 and Cys306/Cys317. The segment at 359–364 is interaction with NRXN1; the sequence is QGEFLN. Residues Cys476 and Cys510 are joined by a disulfide bond. Residue Asn511 is glycosylated (N-linked (GlcNAc...) asparagine). The segment at 636-659 is disordered; it reads TKRPAITPANNPKHSKDPHKTGPE. Over residues 649-658 the composition is skewed to basic and acidic residues; that stretch reads HSKDPHKTGP. A helical transmembrane segment spans residues 677–697; that stretch reads VTIAVGASLLFLNILAFAALY. Over 698–816 the chain is Cytoplasmic; that stretch reads YKKDKRRHET…LPHGHSTTRV (119 aa). Position 712 is a phosphoserine (Ser712).

The protein belongs to the type-B carboxylesterase/lipase family. As to quaternary structure, homodimer. Interacts with NRXN1 in a calcium-dependent manner. Interaction with neurexins is mediated by heparan sulfate glycan modification on neurexin. Interacts through its C-terminus with DLG4/PSD-95 third PDZ domain. As to expression, expressed in fetal and adult brain, prostate and testis.

It is found in the cell membrane. Its subcellular location is the postsynaptic density membrane. Cell surface protein involved in cell-cell-interactions via its interactions with neurexin family members. In Homo sapiens (Human), this protein is Neuroligin-4, Y-linked (NLGN4Y).